Here is a 532-residue protein sequence, read N- to C-terminus: Nucleobase-ascorbate transporter 6 (532 aa).

Residues 1–24 form a disordered region; sequence MAGGGAPAPKADEPQPHPPKDQLP. Residues 10–20 show a composition bias toward basic and acidic residues; it reads KADEPQPHPPK. The next 12 helical transmembrane spans lie at 39-59, 75-95, 97-117, 137-157, 163-185, 192-212, 223-243, 289-309, 361-381, 392-414, 426-446, and 463-483; these read AILL…LIPT, VIQT…LFGT, LPAV…IILS, TQGA…SGLW, FLSP…EFGF, IEIG…LPHV, FAVI…TVGG, FAMM…FVAV, VGSR…SILG, APII…LSFL, FILG…NEYT, and DMVN…AFFL.

Belongs to the nucleobase:cation symporter-2 (NCS2) (TC 2.A.40) family. As to expression, expressed in the apical region of cotyledons 4 days after imbibition (DAI). Expressed in the whole vasculature at 12 DAI. Expressed in the root central cylinder and lateral root primordia. Expressed in the vasculature of sepals, filaments, carpels and developing siliques.

The protein localises to the membrane. This Arabidopsis thaliana (Mouse-ear cress) protein is Nucleobase-ascorbate transporter 6 (NAT6).